Reading from the N-terminus, the 161-residue chain is Globin CTT-VIIB-4 (161 aa).

Residues 1–16 (MKFFAVLALCIVGAIA) form the signal peptide. The Globin domain occupies 18-161 (PLTADEASLV…NTMAVAVAHL (144 aa)). H76 and H111 together coordinate heme b.

This sequence belongs to the globin family. As to quaternary structure, homodimer.

This is Globin CTT-VIIB-4 (CTT-7B4) from Chironomus thummi thummi (Midge).